A 352-amino-acid polypeptide reads, in one-letter code: MAGGGGRPCSPQRALLGMVAIMAVVAEARWGAPGRARAAPEEDQISVGFFRKNVIYGNVRRAENVYVKMFTNSPSLVCMDLSLSQEEIIDPKYSWTGPDGRNLEGRGYANLTGSGELMLVGFQESMSGAYTCTLSHRIIETSAQEEVDVRDTYRFMVYAYREANHVYQVSVRFTAKGCELAANARFVEELKKIMESLISDLTCGVKGPSYRCHSLEAPHRGSPSELFITFQVNPFAPGWEDLCSRLPQDCEDTTNRRAQEATERIGEFFRKQTYALKHQFQTVPTIHYVEGSFSVTPIDSCRPGFGRNNITHRSCAGCCVVCSPGTYSPDSAGSCRVCAGRRTAGYGAKSCP.

Positions 1–28 (MAGGGGRPCSPQRALLGMVAIMAVVAEA) are cleaved as a signal peptide. 2 N-linked (GlcNAc...) asparagine glycosylation sites follow: Asn110 and Asn309.

It belongs to the zona pellucida-binding protein Sp38 family.

The protein resides in the secreted. Its subcellular location is the cytoplasmic vesicle. It is found in the secretory vesicle. It localises to the acrosome. Its function is as follows. May be implicated in the gamete interaction during fertilization. This Gallus gallus (Chicken) protein is Zona pellucida-binding protein 2 (ZPBP2).